A 74-amino-acid chain; its full sequence is Small cysteine-rich protein 8 (74 aa).

The signal sequence occupies residues 1 to 21 (MAAKFHLCLLLIILGTITVQG). Positions 22 to 31 (ARHPGKPHFF) are excised as a propeptide.

It belongs to the Cnidaria small cysteine-rich protein (SCRiP) family. beta subfamily. Post-translationally, contains 4 disulfide bonds.

It localises to the secreted. The protein localises to the nematocyst. Its function is as follows. Induces neurotoxic symptoms on zebrafish. Has also been claimed to be implied in calcification, but tests on homolog proteins suggest that proteins of this family have a neurotoxic function and not a calcification function. The chain is Small cysteine-rich protein 8 from Orbicella faveolata (Mountainous star coral).